The sequence spans 187 residues: UPF0301 protein KPN78578_33170 (187 aa).

It belongs to the UPF0301 (AlgH) family.

The chain is UPF0301 protein KPN78578_33170 from Klebsiella pneumoniae subsp. pneumoniae (strain ATCC 700721 / MGH 78578).